We begin with the raw amino-acid sequence, 357 residues long: Guanine nucleotide-binding protein alpha-2 subunit (357 aa).

A lipid anchor (N-myristoyl glycine) is attached at G2. C4 is lipidated: S-palmitoyl cysteine. The G-alpha domain maps to 30–356; the sequence is NEVKLLLLGA…TQCVMKAGLY (327 aa). The interval 33–46 is G1 motif; it reads KLLLLGAGESGKST. GTP contacts are provided by E41, S42, G43, K44, S45, and T46. Position 45 (S45) interacts with Mg(2+). The residue at position 113 (S113) is a Phosphoserine. D154, L179, T185, G207, N272, K273, D275, and A328 together coordinate GTP. The segment at 177 to 185 is G2 motif; it reads DILHTRVMT. Residue T185 coordinates Mg(2+). A G3 motif region spans residues 200–209; sequence FRLVDVGGQR. The segment at 268–275 is G4 motif; it reads ILFLNKSD. The G5 motif stretch occupies residues 326-331; the sequence is TCATDT.

This sequence belongs to the G-alpha family. As to quaternary structure, g proteins are composed of 3 units; alpha, beta and gamma. The alpha chain contains the guanine nucleotide binding site. Interacts with the RAP guanine nucleotide exchange factor glfB. Requires Mg(2+) as cofactor. Post-translationally, ser-113 is transiently phosphorylated following stimulation with extracellular cAMP.

In terms of biological role, guanine nucleotide-binding proteins (G proteins) are involved as modulators or transducers in various transmembrane signaling systems. G alpha-2 is required for the early aggregation process and most of the known cAMP receptor-mediated responses. Interacts with downstream effector gflB, a Rap guanine nucleotide exchange factor, to regulate the balance between Ras and Rap signaling at the leading edge of chemotaxing cells. This is Guanine nucleotide-binding protein alpha-2 subunit (gpaB) from Dictyostelium discoideum (Social amoeba).